A 200-amino-acid polypeptide reads, in one-letter code: MTDVALIDAGGANLGSVRYALERLGVEARVVRDAAGLQGAQRVILPGVGAAPEVMSRLRAQGLVAPLRELQVPLIGICLGMQLLFEHSEEGDVECLGLLPGIVRHMTPALGIRVPHMGWNRLVPMRESALLAGLPERASAYFVHGYAAPVTADTVAACDHGGLFTAIVQNGLRCGAQFHPERSADTGARILHNFLEMSFP.

Residues 3–200 (DVALIDAGGA…LHNFLEMSFP (198 aa)) form the Glutamine amidotransferase type-1 domain. Cys-78 serves as the catalytic Nucleophile. Active-site residues include His-179 and Glu-181.

As to quaternary structure, heterodimer of HisH and HisF.

It is found in the cytoplasm. It catalyses the reaction 5-[(5-phospho-1-deoxy-D-ribulos-1-ylimino)methylamino]-1-(5-phospho-beta-D-ribosyl)imidazole-4-carboxamide + L-glutamine = D-erythro-1-(imidazol-4-yl)glycerol 3-phosphate + 5-amino-1-(5-phospho-beta-D-ribosyl)imidazole-4-carboxamide + L-glutamate + H(+). The enzyme catalyses L-glutamine + H2O = L-glutamate + NH4(+). It participates in amino-acid biosynthesis; L-histidine biosynthesis; L-histidine from 5-phospho-alpha-D-ribose 1-diphosphate: step 5/9. In terms of biological role, IGPS catalyzes the conversion of PRFAR and glutamine to IGP, AICAR and glutamate. The HisH subunit catalyzes the hydrolysis of glutamine to glutamate and ammonia as part of the synthesis of IGP and AICAR. The resulting ammonia molecule is channeled to the active site of HisF. This is Imidazole glycerol phosphate synthase subunit HisH from Xanthomonas oryzae pv. oryzae (strain MAFF 311018).